A 1494-amino-acid chain; its full sequence is DNA-directed RNA polymerase subunit beta' (1494 aa).

Zn(2+) is bound by residues cysteine 67, cysteine 69, cysteine 82, and cysteine 85. Mg(2+)-binding residues include aspartate 499, aspartate 501, and aspartate 503. Positions 868, 944, 951, and 954 each coordinate Zn(2+).

The protein belongs to the RNA polymerase beta' chain family. In terms of assembly, the RNAP catalytic core consists of 2 alpha, 1 beta, 1 beta' and 1 omega subunit. When a sigma factor is associated with the core the holoenzyme is formed, which can initiate transcription. It depends on Mg(2+) as a cofactor. The cofactor is Zn(2+).

The enzyme catalyses RNA(n) + a ribonucleoside 5'-triphosphate = RNA(n+1) + diphosphate. Functionally, DNA-dependent RNA polymerase catalyzes the transcription of DNA into RNA using the four ribonucleoside triphosphates as substrates. This Chlorobaculum parvum (strain DSM 263 / NCIMB 8327) (Chlorobium vibrioforme subsp. thiosulfatophilum) protein is DNA-directed RNA polymerase subunit beta'.